The primary structure comprises 70 residues: Conotoxin Cal6.11 (70 aa).

The signal sequence occupies residues 1 to 22 (MKLTCVLIIAVLILTACQFIAA). Positions 23–43 (DNTEYRKWRRSGTSTGMRLGS) are excised as a propeptide. Cystine bridges form between cysteine 46/cysteine 57, cysteine 50/cysteine 62, and cysteine 56/cysteine 69. 4-hydroxyproline occurs at positions 48 and 58. 2 positions are modified to 4-carboxyglutamate: glutamate 60 and glutamate 67.

The protein belongs to the conotoxin O1 superfamily. Expressed by the venom duct.

It is found in the secreted. In terms of biological role, probable neurotoxin with unknown target. Possibly targets ion channels. This Californiconus californicus (California cone) protein is Conotoxin Cal6.11.